A 239-amino-acid chain; its full sequence is DNA repair protein RecO (239 aa).

Belongs to the RecO family.

Functionally, involved in DNA repair and RecF pathway recombination. The chain is DNA repair protein RecO from Glaesserella parasuis serovar 5 (strain SH0165) (Haemophilus parasuis).